Consider the following 652-residue polypeptide: Epithelial sodium channel subunit gamma (652 aa).

Residues Met1–Leu54 lie on the Cytoplasmic side of the membrane. A helical transmembrane segment spans residues Leu55 to Ile75. Over Ser76–Gln537 the chain is Extracellular. 8 disulfide bridges follow: Cys100–Cys286, Cys210–Cys217, Cys263–Cys270, Cys375–Cys460, Cys397–Cys456, Cys401–Cys452, Cys410–Cys437, and Cys412–Cys426. The segment at Arg137–Ser224 is gating release of inhibition by proteolysis (GRIP); protease-sensitive region that is responsible for the proteolytic activation of the channel. Residue Asn212 is glycosylated (N-linked (GlcNAc...) asparagine). N-linked (GlcNAc...) asparagine glycosylation is present at Asn500. The helical transmembrane segment at Leu538 to Ile558 threads the bilayer. The Cytoplasmic portion of the chain corresponds to Asp559–His652. Residues Ser610–Asn631 form a disordered region. The short motif at Pro626 to Tyr630 is the PY motif; recruits WW domain-containing proteins and is thereby required for ubiquitination and inhibition of the channel by NEDD4 and NEDD4L element.

This sequence belongs to the amiloride-sensitive sodium channel (TC 1.A.6) family. SCNN1G subfamily. As to quaternary structure, component of the heterotrimeric epithelial sodium channel (ENaC) composed of an alpha/SCNN1A, a beta/SCNN1B and a gamma/SCNN1G subunit. An additional delta/SCNN1D subunit can replace the alpha/SCNN1A subunit to form an alternative channel with specific properties. Interacts with WWP1 (via WW domains). Interacts with WWP2 (via WW domains); inhibits the channel. Interacts with the full-length immature form of PCSK9 (pro-PCSK9); inhibits ENaC by promoting its proteasomal degradation. Interacts with BPIFA1; the interaction is indirect via SCNN1B and inhibits the proteolytic maturation of SCNN1A and SCNN1G and the activation of ENaC. In terms of processing, phosphorylated on serine and threonine residues. Aldosterone and insulin increase the basal level of phosphorylation. Post-translationally, ubiquitinated. Can be ubiquitinated at multiple sites and undergo monoubiquitination and polyubiquitination. Ubiquitination by NEDD4 or NEDD4L inhibits the ENaC channel through endocytosis, intracellular retention and degradation of its individual subunits. ENaC is activated through the proteolytic maturation of its subunits. Furin cleaves the SCNN1G subunit first, followed by cleavage by prostasin (PRSS8), which results in a stepwise increase in the open probability of the channel due to the release of an inhibitory tract. BPIFA1, which is recruited by the SCNN1B subunit, prevents the proteolytic activation of ENaC. In terms of processing, N-glycosylated. N-linked glycans are processed to complex type during ENaC complex assembly and transport to the plasma membrane.

The protein localises to the apical cell membrane. It carries out the reaction Na(+)(in) = Na(+)(out). Its activity is regulated as follows. Originally identified and characterized by its inhibition by the diuretic drug amiloride. Its function is as follows. This is one of the three pore-forming subunits of the heterotrimeric epithelial sodium channel (ENaC), a critical regulator of sodium balance and fluid homeostasis. ENaC operates in epithelial tissues, where it mediates the electrodiffusion of sodium ions from extracellular fluid through the apical membrane of cells, with water following osmotically. It plays a key role in maintaining sodium homeostasis through electrogenic sodium reabsorption in the kidneys. Additionally, ENaC is essential for airway surface liquid homeostasis, which is crucial for proper mucus clearance. This is Epithelial sodium channel subunit gamma from Bos taurus (Bovine).